Consider the following 341-residue polypeptide: Cell wall mannoprotein PIR1 (341 aa).

The signal sequence occupies residues methionine 1–alanine 18. Residues alanine 19–arginine 63 constitute a propeptide that is removed on maturation. PIR1/2/3 repeat units lie at residues alanine 64–threonine 82, alanine 83–lysine 101, alanine 102–threonine 120, alanine 126–lysine 144, alanine 145–threonine 163, alanine 164–threonine 182, alanine 183–threonine 201, and valine 202–serine 220.

It belongs to the PIR protein family. Covalently linked to beta-1,3-glucan of the inner cell wall layer via an alkali-sensitive ester linkage between the gamma-carboxyl group of glutamic acids, arising from specific glutamines within the PIR1/2/3 repeats, and hydroxyl groups of glucoses of beta-1,3-glucan chains. In terms of processing, O-glycosylated. Extensively O-mannosylated.

Its subcellular location is the secreted. It is found in the cell wall. Its function is as follows. Component of the outer cell wall layer. Required for stability of the cell wall and for optimal growth. Required for resistance against several antifungal and cell wall-perturbing agents and for tolerance to heat shock. The sequence is that of Cell wall mannoprotein PIR1 (PIR1) from Saccharomyces cerevisiae (strain RM11-1a) (Baker's yeast).